A 548-amino-acid polypeptide reads, in one-letter code: Glucose-6-phosphate isomerase (548 aa).

Glu-355 acts as the Proton donor in catalysis. Catalysis depends on residues His-386 and Lys-514.

Belongs to the GPI family.

Its subcellular location is the cytoplasm. It carries out the reaction alpha-D-glucose 6-phosphate = beta-D-fructose 6-phosphate. Its pathway is carbohydrate biosynthesis; gluconeogenesis. The protein operates within carbohydrate degradation; glycolysis; D-glyceraldehyde 3-phosphate and glycerone phosphate from D-glucose: step 2/4. Catalyzes the reversible isomerization of glucose-6-phosphate to fructose-6-phosphate. The polypeptide is Glucose-6-phosphate isomerase (Yersinia enterocolitica serotype O:8 / biotype 1B (strain NCTC 13174 / 8081)).